Consider the following 181-residue polypeptide: MEARRHSALKDSIRSIPDYPKPGIIFRDITTLLSDPRSFRRAVDSLVHPYAGGRIDQVAGIEARGFILGGAVAHQLSSGFVPIRKKGKLPHKTVSTAYALEYGTDEIEIHVDAIKPGDRVILVDDLIATGGTATAAVNLLRQLGAEVIAACFVIDLPEIGGAQRLRDLGVTVRTLMEFEGH.

This sequence belongs to the purine/pyrimidine phosphoribosyltransferase family. As to quaternary structure, homodimer.

It is found in the cytoplasm. The catalysed reaction is AMP + diphosphate = 5-phospho-alpha-D-ribose 1-diphosphate + adenine. It participates in purine metabolism; AMP biosynthesis via salvage pathway; AMP from adenine: step 1/1. Functionally, catalyzes a salvage reaction resulting in the formation of AMP, that is energically less costly than de novo synthesis. This chain is Adenine phosphoribosyltransferase, found in Methylorubrum populi (strain ATCC BAA-705 / NCIMB 13946 / BJ001) (Methylobacterium populi).